A 442-amino-acid chain; its full sequence is MREIVCVQAGQCGNQIGSKFWEVISDEHGVDPTGTYQGDSDLQLERINVYFDEATGGRYVPRAVLIDLEPGTMDSVRAGPYGQIFRPDNFIFGQSGAGNNWAKGHYTEGAELIDSVLDVCRKEAESCDCLQGFQICHSLGGGTGSGMGTLLISKLREEYPDRIMMTFSIIPSPKVSDTVVEPYNTTLSVHQLVENSDESMCIDNEALYDICFRTLKLTTPTFGDLNHLVSAVVSGVTCCLRFPGQLNSDLRKLAVNLVPFPRLHFFMMGFAPLSSRGSQQYRGLSVPDVTQQMFDAKNMMQAADPAHGRYLTASALFRGRMSTKEVDEQMLNVQNKNSSYFIEWIPNNIKSSICDIPPKGLKMAVTFVGNNTCIQEMFRRVGEQFTAMFRRKAFLHWYTGEGMDEMEFTEAESNMNDLVSEYQQYQDATIEEEGEFDEEEQY.

GTP contacts are provided by Gln-11, Glu-69, Ser-138, Gly-142, Thr-143, Gly-144, Asn-204, and Asn-226. Residue Glu-69 coordinates Mg(2+).

This sequence belongs to the tubulin family. Dimer of alpha and beta chains. A typical microtubule is a hollow water-filled tube with an outer diameter of 25 nm and an inner diameter of 15 nM. Alpha-beta heterodimers associate head-to-tail to form protofilaments running lengthwise along the microtubule wall with the beta-tubulin subunit facing the microtubule plus end conferring a structural polarity. Microtubules usually have 13 protofilaments but different protofilament numbers can be found in some organisms and specialized cells. Mg(2+) is required as a cofactor.

The protein resides in the cytoplasm. Its subcellular location is the cytoskeleton. Tubulin is the major constituent of microtubules, a cylinder consisting of laterally associated linear protofilaments composed of alpha- and beta-tubulin heterodimers. Microtubules grow by the addition of GTP-tubulin dimers to the microtubule end, where a stabilizing cap forms. Below the cap, tubulin dimers are in GDP-bound state, owing to GTPase activity of alpha-tubulin. This Trypanosoma cruzi protein is Tubulin beta chain.